The chain runs to 524 residues: uncharacterized protein (524 aa).

A helical membrane pass occupies residues 13–33 (EFILLILGMTVVGIVITMGLV).

Its subcellular location is the membrane. This is an uncharacterized protein from Methanocaldococcus jannaschii (strain ATCC 43067 / DSM 2661 / JAL-1 / JCM 10045 / NBRC 100440) (Methanococcus jannaschii).